The chain runs to 99 residues: DNA-binding protein Fis (99 aa).

The segment at residues 75–94 is a DNA-binding region (H-T-H motif); sequence QTRAANMLGINRGTLRKKLK.

Belongs to the transcriptional regulatory Fis family. As to quaternary structure, homodimer.

Functionally, activates ribosomal RNA transcription. Plays a direct role in upstream activation of rRNA promoters. The protein is DNA-binding protein Fis of Haemophilus influenzae (strain PittEE).